A 363-amino-acid polypeptide reads, in one-letter code: Thioredoxin domain-containing protein C13F5.05, mitochondrial (363 aa).

The transit peptide at 1-24 directs the protein to the mitochondrion; that stretch reads MLFRIPTLFTLFLACFSLVSGVFG. Residues 32-141 form the Thioredoxin domain; the sequence is NTIELNSKNF…KSLQKFVSDS (110 aa).

It is found in the mitochondrion. In Schizosaccharomyces pombe (strain 972 / ATCC 24843) (Fission yeast), this protein is Thioredoxin domain-containing protein C13F5.05, mitochondrial.